The primary structure comprises 241 residues: Beta-casein (241 aa).

An N-terminal signal peptide occupies residues 1-15; sequence MKILILACLVALALA. Residues 21 to 45 form a disordered region; that stretch reads LNVSSETVESLSSNEPDSSSEESIT. Ser-24 is modified (phosphoserine; in form 4-P, form 5-P, form 6-P and form 7-P). Ser-25 is subject to Phosphoserine; in form 7-P. The residue at position 27 (Thr-27) is a Phosphothreonine; in form 6-P and form 7-P. 2 positions are modified to phosphoserine: Ser-30 and Ser-32. Ser-33 carries the post-translational modification Phosphoserine; in form 5-P, form 6-P and form 7-P. Ser-38, Ser-39, and Ser-40 each carry phosphoserine; in form 4-P, form 5-P, form 6-P and form 7-P. At Asn-150 the chain carries Deamidated asparagine.

Belongs to the beta-casein family. In terms of processing, there are at least five different forms found in milk, with varying degrees of phosphorylation. These include form 3-P which is phosphorylated at three sites that have not been determined, this form is present in very low amounts, form 4-P which is phosphorylated at four sites, form 5-P which is phosphorylated at five sites, form 6-P which is phosphorylated at six sites, and form 7-P which is phosphorylated at seven sites. Post-translationally, spontaneous deamidation of Asn-150 produces aspartate or isoaspartate. Mammary gland specific. Secreted in milk.

The protein resides in the secreted. Functionally, important role in determination of the surface properties of the casein micelles. The chain is Beta-casein from Equus caballus (Horse).